Consider the following 428-residue polypeptide: Keratin, type I cytoskeletal 18-A (428 aa).

Positions 2–78 (SSSRSVYSSS…NVNLFGGVQN (77 aa)) are head. A disordered region spans residues 24–45 (SAPRFTPGSSAASVHAGAGGSG). The interval 79–114 (EKETMQDLNDRLASYLERVRSLESANKKLEVQIRQH) is coil 1A. Positions 79 to 389 (EKETMQDLND…RLLEGDSFDL (311 aa)) constitute an IF rod domain. Residues 115–130 (TEKKGPAKDWSPYYMT) form a linker 1 region. Positions 131-222 (IEDLKKQVFN…KNHQDDVNEL (92 aa)) are coil 1B. The linker 12 stretch occupies residues 223 to 246 (QAQIASSAVTVEVDAPKSQDLGKI). The coil 2 stretch occupies residues 247-384 (MADLRAQYDE…IQTYRRLLEG (138 aa)). The tract at residues 385 to 428 (DSFDLQDAVPVVTTQTVKKVITTTQRLVDGKVVAESNNTEVIKS) is tail.

This sequence belongs to the intermediate filament family. Heterotetramer of two type I and two type II keratins. Keratin-18 associates with keratin-8. Proteolytically cleaved by caspases during epithelial cell apoptosis. As to expression, expressed at high levels in notochord and low levels in adult liver.

When phosphorylated, plays a role in filament reorganization. The sequence is that of Keratin, type I cytoskeletal 18-A (krt18-a) from Xenopus laevis (African clawed frog).